Consider the following 90-residue polypeptide: Putative beta-neurotoxin RjAa14F (90 aa).

Positions 1–18 are cleaved as a signal peptide; that stretch reads MKILIFIIASFMLIGVEC. The LCN-type CS-alpha/beta domain occupies 19 to 89; it reads KEGYPTNSEG…VWDPNNNKCV (71 aa). Cystine bridges form between cysteine 29/cysteine 88, cysteine 33/cysteine 62, cysteine 40/cysteine 69, and cysteine 44/cysteine 71.

Belongs to the long (4 C-C) scorpion toxin superfamily. Sodium channel inhibitor family. Beta subfamily. In terms of tissue distribution, expressed by the venom gland.

The protein localises to the secreted. In terms of biological role, beta toxins bind voltage-independently at site-4 of sodium channels (Nav) and shift the voltage of activation toward more negative potentials thereby affecting sodium channel activation and promoting spontaneous and repetitive firing. This is Putative beta-neurotoxin RjAa14F from Rhopalurus junceus (Caribbean blue scorpion).